Reading from the N-terminus, the 491-residue chain is MHKKLPTRAENFSEWYNEIIKRAELAENAAVRGCMTIRPYGFAIWEKMQAILDKAFKATGHENAYFPIFIPKSYLNREAAHVEGFAKECAVVTHYRLKATEDGQQVVVDPSAKLEEELIVRPTSETIIWNSYKNWIQSYRDLPLLINQWCNVVRWEMRTRLFLRTAEFLWQEGHTAHATQAEAEQEALQMLNIYADFGKDYLAIPFLKGIKTEHERFAGAEETYTIEALMQDGKALQAGTSHFLGQRFAKAFEVTFTNQAGQLDYVWGTSWGLTTRLIGALVMTHSDDKGLVLPPRVAPIQIVIIPIYRTQEEKEAIQQQAQHIQQQLIAHNISAKLDGRDEHKPGWKFAEYELKGVPIRMAIGPNDLANNTVELTRRDTSEKTTVPTDNIIVVVKSMLDSIHDNLYQRAYEFREQNTYQVNSYEEFKTAISQKRGFILAHWDGTKETERQIHAETKATIRCIPLEVNTEPGVCIYTGKPSKQRVVFGQAY.

It belongs to the class-II aminoacyl-tRNA synthetase family. ProS type 3 subfamily. Homodimer.

Its subcellular location is the cytoplasm. The catalysed reaction is tRNA(Pro) + L-proline + ATP = L-prolyl-tRNA(Pro) + AMP + diphosphate. Catalyzes the attachment of proline to tRNA(Pro) in a two-step reaction: proline is first activated by ATP to form Pro-AMP and then transferred to the acceptor end of tRNA(Pro). In Amoebophilus asiaticus (strain 5a2), this protein is Proline--tRNA ligase.